The sequence spans 250 residues: Cysteine proteinase inhibitor 12 (250 aa).

An N-terminal signal peptide occupies residues 1-32; that stretch reads MRVAATTRPASSSAAAPLPLFLLLAVAAAAAA. Cystatin domains are found at residues 49 to 137 and 156 to 202; these read GGAH…RNTG and PGWR…AEVV. The Secondary area of contact motif lies at 93–97; the sequence is QVVAG.

It belongs to the cystatin family. Phytocystatin subfamily.

Its subcellular location is the secreted. In terms of biological role, specific inhibitor of cysteine proteinases. Probably involved in the regulation of endogenous processes and in defense against pests and pathogens. The protein is Cysteine proteinase inhibitor 12 of Oryza sativa subsp. japonica (Rice).